The following is a 434-amino-acid chain: MSWVQVNLLARGLSRGWGSICRTVLSGTPFAQPSLQARGLHCSAVTHKDDVWLVPRPSEPQKKPIKVPAMHEDLFRPSGNGEQDKASFLNAVRSFGEHNVRKRGHVDFIYLALRKMPEFGVERDLSVYNLLLDVFPKEVFRPRNAIQRIFVHYPRQQECGVAVLEQMERHGVMPNTETEFLLIQVFGHKSYPMLKFLRMKLWFTRFKNINPYPVPRDLPQDPLDLAKLGLRHMEPDLSAKVTVYQMSLPSESTGIEDPTQPHIVGIQSPDQQAALARHNPSRPVFVEGPFPLWLRNKCVYYHILRADLPPPEEETVEEIPEEWNLYYPMQLDLEYSRSAWDNYEFDMDEVTEGPVFAMCMTGAHDQATLVKWIQGLQETNPTLAQIPVVFRLARSTGELLATTRLEGQSPPHSPPKGPEEDDEAIQAQQRQGQS.

A mitochondrion-targeting transit peptide spans 1-48 (MSWVQVNLLARGLSRGWGSICRTVLSGTPFAQPSLQARGLHCSAVTHK). A Glycyl lysine isopeptide (Lys-Gly) (interchain with G-Cter in ubiquitin) cross-link involves residue Lys-371. Residues 403-434 (TRLEGQSPPHSPPKGPEEDDEAIQAQQRQGQS) form a disordered region.

Belongs to the ECSIT family. In terms of assembly, interacts with MAP3K1, SMAD4 and TRAF6. Interacts with SMAD1 only after BMP4-treatment. Part of the mitochondrial complex I assembly/MCIA complex that comprises at least the core subunits TMEM126B, NDUFAF1, ECSIT and ACAD9 and complement subunits such as COA1 and TMEM186. Interacts with NDUFAF1. Interacts with ACAD9. Interacts with TRIM59. Interacts with TMEM70 and TMEM242. Interacts (when ubiquitinated) with NF-kappa-B subunits RELA and NFKB1. Interacts with RIGI, IFIT1 and MAVS; these interactions promote RLR-mediated type I IFN induction. Interacts with SQSTM1; this interaction inhibits TLR4 signaling via functional regulation of the TRAF6-ECSIT complex. Interacts with cereblon/CRBN; this interaction inhibits the ubiquitination of ECSIT. Post-translationally, ubiquitinated on Lys-371; leading to translocation in the nucleus together with RELA and NFKB1 and expression of NF-kappa-B-dependent genes.

The protein localises to the cytoplasm. It is found in the nucleus. It localises to the mitochondrion. In terms of biological role, adapter protein that plays a role in different signaling pathways including TLRs and IL-1 pathways or innate antiviral induction signaling. Plays a role in the activation of NF-kappa-B by forming a signal complex with TRAF6 and TAK1/MAP3K7 to activate TAK1/MAP3K7 leading to activation of IKKs. Once ubiquitinated, interacts with the dissociated RELA and NFKB1 proteins and translocates to the nucleus where it induces NF-kappa-B-dependent gene expression. Plays a role in innate antiviral immune response by bridging the pattern recognition receptors RIGI and MDA5/IFIT1 to the MAVS complex at the mitochondrion. Promotes proteolytic activation of MAP3K1. Involved in the BMP signaling pathway. Required for normal embryonic development. As part of the MCIA complex, involved in the assembly of the mitochondrial complex I. This Rattus norvegicus (Rat) protein is Evolutionarily conserved signaling intermediate in Toll pathway, mitochondrial.